The primary structure comprises 493 residues: Putative trans-acting regulator SP_1800 (493 aa).

It belongs to the AtxA/AcpA family.

This is Putative trans-acting regulator SP_1800 from Streptococcus pneumoniae serotype 4 (strain ATCC BAA-334 / TIGR4).